The following is a 302-amino-acid chain: MASTTDMSTYKLNHTMIRVKDLDKSLKFYTEVFGMKLIDQWVFEENEFSLSFLAFDGPGALNHGVERSKREGILELTYNFGTEKKEGPVYINGNTEPKRGFGHICFTVDNIESACAYLESKGVSFKKKLSDGKMKHIAFALDPDNYWIELVSQSETKPKANISNFRFNHTMVRVKDPEPSIAFYEKLGMKVIDKADHPNGKFTNYFLAYPSDLPRHDREGLLELTHNWGTEKESGPVYHNGNDGDEKGYGHVCISVDNINAACSKFEAEGLPFKKKLTDGRMKDIAFLLDPDNYWVEVIEQK.

2 VOC domains span residues 11-153 and 166-301; these read KLNH…LVSQ and RFNH…VIEQ. Histidine 14 contacts Zn(2+). Arginine 18 lines the substrate pocket. Glutamate 75 is a binding site for Zn(2+). Asparagine 79, arginine 99, and histidine 103 together coordinate substrate. Zn(2+) is bound by residues histidine 103 and glutamate 149. The Proton donor/acceptor role is filled by glutamate 149.

Belongs to the glyoxalase I family. As to quaternary structure, monomer. The cofactor is Zn(2+). Requires Cu(2+) as cofactor. It depends on Ni(2+) as a cofactor. Mn(2+) is required as a cofactor.

It carries out the reaction (R)-S-lactoylglutathione = methylglyoxal + glutathione. Its pathway is secondary metabolite metabolism; methylglyoxal degradation; (R)-lactate from methylglyoxal: step 1/2. In terms of biological role, catalyzes the conversion of hemimercaptal, formed from methylglyoxal and glutathione, to S-lactoylglutathione. The protein is Lactoylglutathione lyase (glo1) of Schizosaccharomyces pombe (strain 972 / ATCC 24843) (Fission yeast).